The sequence spans 308 residues: Acyl transferase (308 aa).

Catalysis depends on charge relay system residues Ser116, Asp213, and His243.

Belongs to the LuxD family.

It functions in the pathway lipid metabolism; fatty acid reduction for biolumincescence. Acyl transferase is part of the fatty acid reductase system required for aldehyde biosynthesis; it produces fatty acids for the luminescent reaction. This is Acyl transferase from Shewanella hanedai (Alteromonas hanedai).